Here is a 166-residue protein sequence, read N- to C-terminus: UPF0561 protein C2orf68 homolog (166 aa).

Basic and acidic residues predominate over residues 32–49; the sequence is NQLDRDDYDKKVKQAAKE. The disordered stretch occupies residues 32 to 107; the sequence is NQLDRDDYDK…SELEPPGRQL (76 aa). A compositionally biased stretch (low complexity) spans 91–101; the sequence is ESSSSGSSELE.

It belongs to the UPF0561 family.

The polypeptide is UPF0561 protein C2orf68 homolog (Mus musculus (Mouse)).